The following is a 180-amino-acid chain: MSRIGKKIILLPTNLSTQFDGQTITVTGPKGTLSRTLPAGINLEILNDTIAVKTSGQTKMASQLHGLSRTLISNMIEGVSNGFFKKLQIQGVGYRSQIDNQDLILSVGYSHVVKIKPPANIEIKVENNTNITVSGIDKEVVGQVASTIRSIRPPEPYKGKGIRYQGEFVRRKAGKAGKGK.

It belongs to the universal ribosomal protein uL6 family. Part of the 50S ribosomal subunit.

It is found in the plastid. The protein resides in the chloroplast. In terms of biological role, binds 23S rRNA. The sequence is that of Large ribosomal subunit protein uL6c (rpl6) from Pyropia yezoensis (Susabi-nori).